We begin with the raw amino-acid sequence, 476 residues long: Glycogen synthase (476 aa).

Residue K15 coordinates ADP-alpha-D-glucose.

The protein belongs to the glycosyltransferase 1 family. Bacterial/plant glycogen synthase subfamily.

The enzyme catalyses [(1-&gt;4)-alpha-D-glucosyl](n) + ADP-alpha-D-glucose = [(1-&gt;4)-alpha-D-glucosyl](n+1) + ADP + H(+). It functions in the pathway glycan biosynthesis; glycogen biosynthesis. Functionally, synthesizes alpha-1,4-glucan chains using ADP-glucose. The polypeptide is Glycogen synthase (Haemophilus influenzae (strain PittEE)).